A 544-amino-acid polypeptide reads, in one-letter code: Chaperonin GroEL 3 (544 aa).

Residues 30-33, Lys51, 87-91, Gly415, and Asp496 contribute to the ATP site; these read TLGP and DGTTT.

It belongs to the chaperonin (HSP60) family. In terms of assembly, forms a cylinder of 14 subunits composed of two heptameric rings stacked back-to-back. Interacts with the co-chaperonin GroES.

The protein localises to the cytoplasm. It carries out the reaction ATP + H2O + a folded polypeptide = ADP + phosphate + an unfolded polypeptide.. In terms of biological role, together with its co-chaperonin GroES, plays an essential role in assisting protein folding. The GroEL-GroES system forms a nano-cage that allows encapsulation of the non-native substrate proteins and provides a physical environment optimized to promote and accelerate protein folding. The polypeptide is Chaperonin GroEL 3 (Rhizobium etli (strain ATCC 51251 / DSM 11541 / JCM 21823 / NBRC 15573 / CFN 42)).